A 764-amino-acid chain; its full sequence is Molybdenum cofactor sulfurase 3 (764 aa).

An N6-(pyridoxal phosphate)lysine modification is found at lysine 228. Residue cysteine 394 is part of the active site. An MOSC domain is found at 607–762; the sequence is LRLLKQSDEE…LYCNSVVEGL (156 aa).

This sequence belongs to the class-V pyridoxal-phosphate-dependent aminotransferase family. MOCOS subfamily. The cofactor is pyridoxal 5'-phosphate.

It catalyses the reaction Mo-molybdopterin + L-cysteine + AH2 = thio-Mo-molybdopterin + L-alanine + A + H2O. Functionally, sulfurates the molybdenum cofactor. Sulfation of molybdenum is essential for xanthine dehydrogenase (XDH) and aldehyde oxidase (ADO) enzymes in which molybdenum cofactor is liganded by 1 oxygen and 1 sulfur atom in active form. The sequence is that of Molybdenum cofactor sulfurase 3 from Aedes aegypti (Yellowfever mosquito).